We begin with the raw amino-acid sequence, 392 residues long: Tropomodulin (392 aa).

Disordered regions lie at residues 1-30 (MSQA…QLPS), 59-90 (DLNN…GPYK), and 118-138 (QKRG…PENG). Residues 16 to 29 (SAPSANSQQGTQLP) show a composition bias toward polar residues. Composition is skewed to basic and acidic residues over residues 76 to 90 (RCRD…GPYK) and 122 to 138 (KVYD…PENG).

This sequence belongs to the tropomodulin family. In terms of assembly, binds to the N-terminus of actin.

Its subcellular location is the cytoplasm. The protein localises to the cytoskeleton. In terms of biological role, acts as the pointed end capping protein which maintains the length and dynamics of the actin filament. Blocks the elongation and depolymerization of the actin filaments at the pointed end. The polypeptide is Tropomodulin (unc-94) (Caenorhabditis elegans).